Reading from the N-terminus, the 305-residue chain is Carbamate kinase (305 aa).

It belongs to the carbamate kinase family.

It is found in the cytoplasm. The enzyme catalyses hydrogencarbonate + NH4(+) + ATP = carbamoyl phosphate + ADP + H2O + H(+). The protein operates within metabolic intermediate metabolism; carbamoyl phosphate degradation; CO(2) and NH(3) from carbamoyl phosphate: step 1/1. The chain is Carbamate kinase (arcC) from Thermoplasma volcanium (strain ATCC 51530 / DSM 4299 / JCM 9571 / NBRC 15438 / GSS1).